Reading from the N-terminus, the 77-residue chain is Ras-related C3 botulinum toxin substrate 1 (77 aa).

22 to 24 (KLD) provides a ligand contact to GTP. K53 is covalently cross-linked (Glycyl lysine isopeptide (Lys-Gly) (interchain with G-Cter in ubiquitin)). GTP is bound at residue 65 to 66 (AL).

Belongs to the small GTPase superfamily. Rho family. Interacts with NISCH. Interacts with PIP5K1A. Interacts with the GTP-bound form of RAB7A. Interacts with SRGAP2. Interacts with CYFIP1/SRA-1. Interacts with PLXNB3. Interacts with ARHGDIA; the interaction is induced by SEMA5A, mediated through PLXNB3 and inactivates and stabilizes RAC1. Interacts (GTP-bound form preferentially) with PKN2 (via the REM repeats); the interaction stimulates autophosphorylation and phosphorylation of PKN2. Interacts with the GEF proteins PREX1, RASGRF2, FARP1, FARP2, DOCK1, DOCK2 and DOCK7, which promote the exchange between GDP and GTP, and therefore activate it. Interacts with PARD6A, PARD6B and PARD6G in a GTP-dependent manner. Part of a quaternary complex containing PARD3, some PARD6 protein (PARD6A, PARD6B or PARD6G) and some atypical PKC protein (PRKCI or PRKCZ), which plays a central role in epithelial cell polarization. Found in a trimeric complex composed of DOCK1 and ELMO1, which plays a central role in phagocytosis of apoptotic cells. Interacts with RALBP1 via its effector domain. Interacts with PLXNB1. Part of a complex with MAP2K3, MAP3K3, CCM2 and DEF6. Interacts with BAIAP2, BAIAP2L1 and DEF6. Interacts with Y.pseudotuberculosis YPKA and PLCB2. Interacts with NOXA1. Interacts with ARHGEF2. Interacts with TBC1D2. Interacts with UNKL. Interacts with USP6. Interacts with SPATA13. Interacts with ARHGEF16; mediates activation of RAC1 by EPHA2. Interacts with ITGB4. Interacts with S100A8 and calprotectin (S100A8/9). Interacts with PACSIN2. Interacts (when active) with PPP5C (via TPR repeats); activates PPP5C phosphatase activity and translocates PPP5C to the cell membrane. Interacts with RAPH1 (via Ras associating and PH domains). Interacts with MTSS2 (via IMD domain); this interaction may be important to potentiate PDGF-induced RAC1 activation. Interacts with PAK2. Interacts (GTP-bound form) with SH3RF1 and SH3RF3. Found in a complex with SH3RF1, MAPK8IP1/JIP1, MAP3K11/MLK3, MAP2K7/MKK7 and MAPK8/JNK1. Interacts (both active GTP- or inactive GDP-bound forms) with SH3RF2. Interacts (GTP-bound form preferentially) with CYRIB. Interacts with DOCK4 (via DOCKER domain); functions as a guanine nucleotide exchange factor (GEF) for RAC1. Interacts with GARRE1. Interacts with RAP1GDS1. May interact with ARHGAP36. Interacts with DSG3; the interaction is required for DSG3 translocation to cell-cell junctions, organization of cortical F-actin bundles and actin anchoring at cell-cell junctions. Component of the phagocyte NADPH oxidase complex composed of an obligatory core heterodimer formed by the membrane proteins CYBA and CYBB and the cytosolic regulatory subunits NCF1/p47-phox, NCF2/p67-phox, NCF4/p40-phox and the small GTPase RAC1 or RAC2. Interacts with NCF2. Post-translationally, the N-terminus is blocked. GTP-bound active form is ubiquitinated by HACE1, leading to its degradation by the proteasome.

The protein localises to the cytoplasm. It is found in the membrane. It localises to the melanosome. Its subcellular location is the cell projection. The protein resides in the lamellipodium. The protein localises to the dendrite. It is found in the synapse. It localises to the nucleus. The enzyme catalyses GTP + H2O = GDP + phosphate + H(+). With respect to regulation, regulated by guanine nucleotide exchange factors (GEFs) which promote the exchange of bound GDP for free GTP, GTPase activating proteins (GAPs) which increase the GTP hydrolysis activity, and GDP dissociation inhibitors which inhibit the dissociation of the nucleotide from the GTPase. GTP hydrolysis is stimulated by ARHGAP30. Its function is as follows. Plasma membrane-associated small GTPase which cycles between active GTP-bound and inactive GDP-bound states. In its active state, binds to a variety of effector proteins to regulate cellular responses such as secretory processes, phagocytosis of apoptotic cells, epithelial cell polarization, neurons adhesion, migration and differentiation, and growth-factor induced formation of membrane ruffles. Rac1 p21/rho GDI heterodimer is the active component of the cytosolic factor sigma 1, which is involved in stimulation of the NADPH oxidase activity in macrophages. Essential for the SPATA13-mediated regulation of cell migration and adhesion assembly and disassembly. Stimulates PKN2 kinase activity. In concert with RAB7A, plays a role in regulating the formation of RBs (ruffled borders) in osteoclasts. In podocytes, promotes nuclear shuttling of NR3C2; this modulation is required for a proper kidney functioning. Required for atypical chemokine receptor ACKR2-induced LIMK1-PAK1-dependent phosphorylation of cofilin (CFL1) and for up-regulation of ACKR2 from endosomal compartment to cell membrane, increasing its efficiency in chemokine uptake and degradation. In neurons, is involved in dendritic spine formation and synaptic plasticity. In hippocampal neurons, involved in spine morphogenesis and synapse formation, through local activation at synapses by guanine nucleotide exchange factors (GEFs), such as ARHGEF6/ARHGEF7/PIX. In synapses, seems to mediate the regulation of F-actin cluster formation performed by SHANK3. In neurons, plays a crucial role in regulating GABA(A) receptor synaptic stability and hence GABAergic inhibitory synaptic transmission through its role in PAK1 activation and eventually F-actin stabilization. Required for DSG3 translocation to cell-cell junctions, DSG3-mediated organization of cortical F-actin bundles and anchoring of actin at cell junctions; via interaction with DSG3. Subunit of the phagocyte NADPH oxidase complex that mediates the transfer of electrons from cytosolic NADPH to O2 to produce the superoxide anion (O2(-)). This Cavia porcellus (Guinea pig) protein is Ras-related C3 botulinum toxin substrate 1.